We begin with the raw amino-acid sequence, 607 residues long: DNA mismatch repair protein MutL (607 aa).

The protein belongs to the DNA mismatch repair MutL/HexB family.

Functionally, this protein is involved in the repair of mismatches in DNA. It is required for dam-dependent methyl-directed DNA mismatch repair. May act as a 'molecular matchmaker', a protein that promotes the formation of a stable complex between two or more DNA-binding proteins in an ATP-dependent manner without itself being part of a final effector complex. The sequence is that of DNA mismatch repair protein MutL from Anaeromyxobacter sp. (strain K).